The following is a 40-amino-acid chain: Bacterioferritin heavy chain (40 aa).

A Ferritin-like diiron domain is found at Met1–Tyr40. Glu18 is a binding site for Fe cation.

It belongs to the bacterioferritin family. Oligomer consisting of two types of subunits: light chain and heavy chain.

Its function is as follows. May perform analogous functions in iron detoxification and storage to that of animal ferritins. Contains approximately 750 iron atoms per molecule. This is Bacterioferritin heavy chain from Absidia spinosa.